The sequence spans 211 residues: Suppressor of RNA silencing p3 (211 aa).

This sequence belongs to the tenuiviruses p3 protein family. Homodimer.

Its subcellular location is the host cytoplasm. Functionally, acts as a suppressor of RNA-mediated gene silencing, also known as post-transcriptional gene silencing (PTGS), presumably through the binding of dsRNA. This Avena sativa (Oat) protein is Suppressor of RNA silencing p3.